Reading from the N-terminus, the 187-residue chain is Transmembrane protein 11-A, mitochondrial (187 aa).

Helical transmembrane passes span 79–95 and 102–119; these read TAVL…LALP and VSLP…LYGI.

It belongs to the TMEM11 family.

Its subcellular location is the mitochondrion inner membrane. In terms of biological role, plays a role in mitochondrial morphogenesis. The sequence is that of Transmembrane protein 11-A, mitochondrial (tmem11-a) from Xenopus laevis (African clawed frog).